Reading from the N-terminus, the 354-residue chain is G-protein coupled estrogen receptor 1 (354 aa).

The Extracellular segment spans residues 1-40; sequence MEEQTTSLVWIYVNSTEQLNTSYEYNTTYLIEDSDKYQSY. The helical transmembrane segment at 41–61 threads the bilayer; the sequence is VIGLFLSCLYTILLFPIGFIG. Residues 62–81 lie on the Cytoplasmic side of the membrane; the sequence is NILILVVNLNHRGKMAIPDL. The chain crosses the membrane as a helical span at residues 82–102; sequence YFVNLAVADLILVADSLIEVF. The Extracellular portion of the chain corresponds to 103–112; that stretch reads NLNEKYYDYA. A helical transmembrane segment spans residues 113–133; sequence VLCTFMSLFLQVNMYSSIFFL. Cysteine 115 and cysteine 192 are disulfide-bonded. Residues 134–160 are Cytoplasmic-facing; that stretch reads TWMSFDRYIALANSMSSSPLRTMQHAK. Residues 161 to 181 traverse the membrane as a helical segment; sequence LSCGLIWMASILATLLPFTIV. The Extracellular segment spans residues 182-202; sequence QTQHRGEVHFCFANVFEIQWL. Residues 203–223 traverse the membrane as a helical segment; it reads EVTIGFLVPFSIIGLCYSLIG. The Cytoplasmic segment spans residues 224 to 245; the sequence is RILMRSQKHRGLWPRRQKALRM. The chain crosses the membrane as a helical span at residues 246–266; the sequence is IVVVVLVFFICWLPENVFISI. The Extracellular segment spans residues 267-292; that stretch reads QLLQGTADPSQRTATTLRHDYPLTGH. A helical membrane pass occupies residues 293-313; it reads IVNLAAFSNSCLNPIIYSFLG. At 314–353 the chain is on the cytoplasmic side; it reads ETFRDKLRLFIKQKASWSVVNRFCHHGLDLHLPVRSEVSE.

It belongs to the G-protein coupled receptor 1 family. In terms of assembly, homodimer. Heterodimer. Expressed in oocytes (at protein level). Highly expressed in brain, heart, testis and ovary. Weakly expressed in muscle and intestine.

Its subcellular location is the nucleus. It localises to the cytoplasm. It is found in the perinuclear region. The protein resides in the cytoskeleton. The protein localises to the cytoplasmic vesicle membrane. Its subcellular location is the cell membrane. It localises to the basolateral cell membrane. It is found in the endoplasmic reticulum membrane. The protein resides in the early endosome. The protein localises to the recycling endosome. Its subcellular location is the golgi apparatus. It localises to the trans-Golgi network. It is found in the golgi apparatus membrane. The protein resides in the cell projection. The protein localises to the dendrite. Its subcellular location is the dendritic spine membrane. It localises to the axon. It is found in the postsynaptic density. The protein resides in the mitochondrion membrane. Membrane G-protein coupled estrogen receptor that binds to 17-beta-estradiol (E2) with high affinity, leading to rapid and transient activation of numerous intracellular signaling pathways. Plays a role in the embryonic development of sensory and motor neurons. May induce apoptosis and reduce proliferation of brain cells. Involved in maintenance of meiotic arrest in oocytes. In Micropogonias undulatus (Atlantic croaker), this protein is G-protein coupled estrogen receptor 1 (gper1).